Consider the following 122-residue polypeptide: Serum amyloid A-2 protein (122 aa).

The signal sequence occupies residues 1–18 (MKLLSGLLLCSLVLGVSG). Glutamine 19 is subject to Pyrrolidone carboxylic acid. Residues 90 to 122 (GAEDSMADQAANEWGRSGKDPNHFRPKGLPDKY) are disordered. Residues 105–122 (RSGKDPNHFRPKGLPDKY) are compositionally biased toward basic and acidic residues.

Belongs to the SAA family. In terms of assembly, apolipoprotein of the HDL complex. Expressed by the liver; secreted in plasma.

The protein localises to the secreted. In terms of biological role, major acute phase reactant. The sequence is that of Serum amyloid A-2 protein (SAA2) from Oryctolagus cuniculus (Rabbit).